A 359-amino-acid chain; its full sequence is Ras association domain-containing protein 7 (359 aa).

Residues 6–89 (VAMELKVWVD…VQFVLRRTGP (84 aa)) enclose the Ras-associating domain. Positions 87 to 123 (TGPSLSGRPSSDNCPPPERCPVRASLPPKPSAIPGRE) are disordered. Polar residues predominate over residues 89-99 (PSLSGRPSSDN). Coiled-coil stretches lie at residues 180-208 (WEQE…TAEH) and 242-301 (AAER…QQFI). Residues 339–359 (SHILVSSLSPEVPPMRQSSWR) form a disordered region.

Interacts with MAP2K7 and GTP-bound NRAS. Post-translationally, polyubiquitinated and degraded by the proteasome upon prolonged stress stimuli.

Its subcellular location is the cytoplasm. The protein resides in the cytoskeleton. It localises to the microtubule organizing center. The protein localises to the centrosome. Negatively regulates stress-induced JNK activation and apoptosis by promoting MAP2K7 phosphorylation and inhibiting its ability to activate JNK. Following prolonged stress, anti-apoptotic effect stops because of degradation of RASSF7 protein via the ubiquitin-proteasome pathway. Required for the activation of AURKB and chromosomal congression during mitosis where it stimulates microtubule polymerization. The chain is Ras association domain-containing protein 7 (Rassf7) from Mus musculus (Mouse).